Reading from the N-terminus, the 100-residue chain is Small ribosomal subunit protein uS14c (100 aa).

The protein belongs to the universal ribosomal protein uS14 family. In terms of assembly, part of the 30S ribosomal subunit.

It localises to the plastid. Its subcellular location is the chloroplast. Binds 16S rRNA, required for the assembly of 30S particles. The protein is Small ribosomal subunit protein uS14c of Gracilaria tenuistipitata var. liui (Red alga).